Here is a 276-residue protein sequence, read N- to C-terminus: Putative translation initiation factor eIF-2B subunit 2-like (276 aa).

It belongs to the eIF-2B alpha/beta/delta subunits family. In terms of assembly, complex of two different subunits.

In terms of biological role, catalyzes the exchange of initiation factor 2-bound GDP for GTP. This is Putative translation initiation factor eIF-2B subunit 2-like from Pyrococcus horikoshii (strain ATCC 700860 / DSM 12428 / JCM 9974 / NBRC 100139 / OT-3).